We begin with the raw amino-acid sequence, 202 residues long: FMN-dependent NADH:quinone oxidoreductase (202 aa).

FMN-binding positions include S10 and M95–F98.

Belongs to the azoreductase type 1 family. As to quaternary structure, homodimer. It depends on FMN as a cofactor.

It carries out the reaction 2 a quinone + NADH + H(+) = 2 a 1,4-benzosemiquinone + NAD(+). The enzyme catalyses N,N-dimethyl-1,4-phenylenediamine + anthranilate + 2 NAD(+) = 2-(4-dimethylaminophenyl)diazenylbenzoate + 2 NADH + 2 H(+). Quinone reductase that provides resistance to thiol-specific stress caused by electrophilic quinones. Its function is as follows. Also exhibits azoreductase activity. Catalyzes the reductive cleavage of the azo bond in aromatic azo compounds to the corresponding amines. This Pseudoalteromonas atlantica (strain T6c / ATCC BAA-1087) protein is FMN-dependent NADH:quinone oxidoreductase.